The sequence spans 226 residues: Uracil-DNA glycosylase (226 aa).

D65 (proton acceptor) is an active-site residue.

It belongs to the uracil-DNA glycosylase (UDG) superfamily. UNG family.

The protein resides in the cytoplasm. It carries out the reaction Hydrolyzes single-stranded DNA or mismatched double-stranded DNA and polynucleotides, releasing free uracil.. Its function is as follows. Excises uracil residues from the DNA which can arise as a result of misincorporation of dUMP residues by DNA polymerase or due to deamination of cytosine. The sequence is that of Uracil-DNA glycosylase from Bacillus pumilus (strain SAFR-032).